A 303-amino-acid chain; its full sequence is Beta-lactamase L2 (303 aa).

A signal peptide (tat-type signal) is located at residues 1–35; the sequence is MLARRRFLQFSGAAVASSLALPLLARAAGKTAASA. Ser-83 acts as the Acyl-ester intermediate in catalysis. Residue 247 to 249 coordinates substrate; that stretch reads KTG.

This sequence belongs to the class-A beta-lactamase family. Post-translationally, predicted to be exported by the Tat system. The position of the signal peptide cleavage has not been experimentally proven.

It carries out the reaction a beta-lactam + H2O = a substituted beta-amino acid. This Stenotrophomonas maltophilia (Pseudomonas maltophilia) protein is Beta-lactamase L2.